The following is a 370-amino-acid chain: Protein Brevis radix-like 3 (370 aa).

A BRX 1 domain is found at 140–221 (KEWVAQVEPG…NFEKVMELYN (82 aa)). 2 stretches are compositionally biased toward polar residues: residues 231–248 (LQTP…QSVK) and 266–291 (PGSS…SSID). The segment at 231–316 (LQTPPVSEDG…VSNASDMESE (86 aa)) is disordered. The BRX 2 domain maps to 315–370 (SEWVEQDEPGIYITIRALPDGNRELRRVRFSRDKFGETHARLWWEQNRARIQQQYL).

This sequence belongs to the BRX family. In terms of tissue distribution, expressed in roots.

Its subcellular location is the nucleus. This chain is Protein Brevis radix-like 3 (BRXL3), found in Arabidopsis thaliana (Mouse-ear cress).